The following is a 425-amino-acid chain: Adenylosuccinate synthetase (425 aa).

GTP-binding positions include Gly12–Lys18 and Gly40–Thr42. Asp13 acts as the Proton acceptor in catalysis. The Mg(2+) site is built by Asp13 and Gly40. Residues Asp13 to Lys16, Asn38 to His41, Thr130, Arg144, Gln224, Thr239, and Arg301 contribute to the IMP site. The active-site Proton donor is the His41. Thr297–Arg303 is a substrate binding site. GTP is bound by residues Arg303, Lys329–Asp331, and Ser411–Ser413.

It belongs to the adenylosuccinate synthetase family. In terms of assembly, homodimer. The cofactor is Mg(2+).

The protein localises to the cytoplasm. The catalysed reaction is IMP + L-aspartate + GTP = N(6)-(1,2-dicarboxyethyl)-AMP + GDP + phosphate + 2 H(+). It participates in purine metabolism; AMP biosynthesis via de novo pathway; AMP from IMP: step 1/2. Plays an important role in the de novo pathway of purine nucleotide biosynthesis. Catalyzes the first committed step in the biosynthesis of AMP from IMP. This Wolbachia sp. subsp. Drosophila simulans (strain wRi) protein is Adenylosuccinate synthetase.